Here is a 195-residue protein sequence, read N- to C-terminus: Shikimate kinase (195 aa).

Residue 33 to 38 coordinates ATP; sequence GAGKTT. Mg(2+) is bound at residue T37. Positions 55, 79, and 101 each coordinate substrate. An ATP-binding site is contributed by R139. Residue R158 participates in substrate binding. R175 provides a ligand contact to ATP.

This sequence belongs to the shikimate kinase family. In terms of assembly, monomer. The cofactor is Mg(2+).

The protein localises to the cytoplasm. It catalyses the reaction shikimate + ATP = 3-phosphoshikimate + ADP + H(+). The protein operates within metabolic intermediate biosynthesis; chorismate biosynthesis; chorismate from D-erythrose 4-phosphate and phosphoenolpyruvate: step 5/7. Its function is as follows. Catalyzes the specific phosphorylation of the 3-hydroxyl group of shikimic acid using ATP as a cosubstrate. In Nitrosospira multiformis (strain ATCC 25196 / NCIMB 11849 / C 71), this protein is Shikimate kinase.